A 233-amino-acid polypeptide reads, in one-letter code: tRNA (guanine-N(7)-)-methyltransferase (233 aa).

S-adenosyl-L-methionine-binding residues include glutamate 65, glutamate 90, aspartate 117, and aspartate 139. The active site involves aspartate 139. Substrate contacts are provided by residues lysine 143, aspartate 175, and 212–215; that span reads TRYE.

It belongs to the class I-like SAM-binding methyltransferase superfamily. TrmB family.

The enzyme catalyses guanosine(46) in tRNA + S-adenosyl-L-methionine = N(7)-methylguanosine(46) in tRNA + S-adenosyl-L-homocysteine. Its pathway is tRNA modification; N(7)-methylguanine-tRNA biosynthesis. In terms of biological role, catalyzes the formation of N(7)-methylguanine at position 46 (m7G46) in tRNA. The polypeptide is tRNA (guanine-N(7)-)-methyltransferase (Roseobacter denitrificans (strain ATCC 33942 / OCh 114) (Erythrobacter sp. (strain OCh 114))).